Reading from the N-terminus, the 78-residue chain is Large ribosomal subunit protein bL28 (78 aa).

Polar residues predominate over residues 1–20; it reads MSRVCQLTGTRANNGMSVSH. Residues 1–23 form a disordered region; that stretch reads MSRVCQLTGTRANNGMSVSHSHI.

This sequence belongs to the bacterial ribosomal protein bL28 family.

This Prochlorococcus marinus (strain NATL2A) protein is Large ribosomal subunit protein bL28.